The chain runs to 466 residues: Myocardial zonula adherens protein (466 aa).

Over residues 1 to 10 (MLRSTSTVTL) the composition is skewed to polar residues. The signal sequence occupies residues 1–20 (MLRSTSTVTLLSGGAARTPG). The disordered stretch occupies residues 1–23 (MLRSTSTVTLLSGGAARTPGAPS). Coiled-coil stretches lie at residues 96–142 (QLKE…SHAQ) and 174–418 (LQKT…TQAK). The Required for DYNLL1-binding signature appears at 424 to 425 (RE).

The protein belongs to the MYZAP family. In terms of assembly, interacts with DSP, MPRIP and TJP1/ZO1. Interaction with MPRIP inhibits the activation of transcription factor SRF. Interacts with GRIN1. Interacts with DYNLL1. Detected in heart, liver, skeletal muscle, placenta, small intestine, lung, prostate and testis. Expressed in arrector pili muscle (at protein level).

The protein resides in the cytoplasm. The protein localises to the cytoskeleton. Its subcellular location is the cell membrane. It is found in the myofibril. It localises to the sarcomere. The protein resides in the i band. The protein localises to the z line. Its subcellular location is the cell junction. Its function is as follows. Plays a role in cellular signaling via Rho-related GTP-binding proteins and subsequent activation of transcription factor SRF. Targets TJP1 to cell junctions. In cortical neurons, may play a role in glutaminergic signal transduction through interaction with the NMDA receptor subunit GRIN1. The sequence is that of Myocardial zonula adherens protein (MYZAP) from Homo sapiens (Human).